The chain runs to 227 residues: Brain acid soluble protein 1 (227 aa).

Basic residues predominate over residues 1-11 (MGGKLSKKKKG). The interval 1-227 (MGGKLSKKKK…NSDQTVTVKE (227 aa)) is disordered. Gly2 carries the N-myristoyl glycine lipid modification. Residues 15-27 (NDEKAKEKDKKAE) show a composition bias toward basic and acidic residues. A Glycyl lysine isopeptide (Lys-Gly) (interchain with G-Cter in SUMO2) cross-link involves residue Lys25. Phosphothreonine is present on residues Thr31 and Thr36. The residue at position 40 (Ser40) is a Phosphoserine. Residues 49–105 (AEAKEGKEKPDQDAEGKAEEKEGEKDAAAAKEEAPKAEPEKTEGAAEAKAEPPKAPE) show a composition bias toward basic and acidic residues. Glycyl lysine isopeptide (Lys-Gly) (interchain with G-Cter in SUMO2) cross-links involve residues Lys84 and Lys97. The segment covering 106–139 (QEQAAPGPAAGGEAPKAAEAAAAPAESAAPAAGE) has biased composition (low complexity). The segment covering 140 to 152 (EPSKEEGEPKKTE) has biased composition (basic and acidic residues). Lys163 participates in a covalent cross-link: Glycyl lysine isopeptide (Lys-Gly) (interchain with G-Cter in SUMO2). Residues Ser164, Ser170, Ser172, Ser176, and Ser195 each carry the phosphoserine modification. Over residues 173 to 185 (KPGSSEAAPSSKE) the composition is skewed to polar residues. The residue at position 196 (Thr196) is a Phosphothreonine. 2 positions are modified to phosphoserine: Ser205 and Ser219. Over residues 218 to 227 (NSDQTVTVKE) the composition is skewed to polar residues.

In terms of tissue distribution, brain.

Its subcellular location is the cell membrane. It is found in the cell projection. The protein resides in the growth cone. The polypeptide is Brain acid soluble protein 1 (BASP1) (Homo sapiens (Human)).